The primary structure comprises 832 residues: Dolichyl-phosphate-mannose--protein mannosyltransferase 6 (832 aa).

Positions methionine 1–threonine 44 are disordered. N-linked (GlcNAc...) asparagine glycosylation is found at asparagine 20 and asparagine 59. A run of 7 helical transmembrane segments spans residues phenylalanine 135–alanine 155, tyrosine 175–tyrosine 194, threonine 206–isoleucine 227, methionine 232–isoleucine 252, leucine 266–tryptophan 286, alanine 293–phenylalanine 311, and leucine 327–alanine 347. A glycan (N-linked (GlcNAc...) asparagine) is linked at asparagine 357. The 55-residue stretch at proline 383–glycine 437 folds into the MIR 1 domain. Asparagine 453 carries N-linked (GlcNAc...) asparagine glycosylation. 2 MIR domains span residues histidine 466–glutamine 522 and proline 537–histidine 595. Transmembrane regions (helical) follow at residues isoleucine 676 to isoleucine 696, leucine 723 to isoleucine 743, valine 755 to leucine 775, and isoleucine 787 to phenylalanine 807.

Belongs to the glycosyltransferase 39 family.

Its subcellular location is the endoplasmic reticulum membrane. It carries out the reaction a di-trans,poly-cis-dolichyl beta-D-mannosyl phosphate + L-seryl-[protein] = 3-O-(alpha-D-mannosyl)-L-seryl-[protein] + a di-trans,poly-cis-dolichyl phosphate + H(+). The catalysed reaction is a di-trans,poly-cis-dolichyl beta-D-mannosyl phosphate + L-threonyl-[protein] = 3-O-(alpha-D-mannosyl)-L-threonyl-[protein] + a di-trans,poly-cis-dolichyl phosphate + H(+). It participates in protein modification; protein glycosylation. In terms of biological role, protein mannosyltransferase (PMT) involved in hyphal morphogenesis and drug sensitivity. Transfers mannose from Dol-P-mannose to Ser or Thr residues on proteins. PMT1, PMT2 and PMT4 account for most of the protein-O-glycosylation activity, while PMT5 and PMT6 may specifically modulate a much narrower spectrum of target proteins. Required for biofilm formation and virulence. The sequence is that of Dolichyl-phosphate-mannose--protein mannosyltransferase 6 (PMT6) from Candida albicans (strain SC5314 / ATCC MYA-2876) (Yeast).